Here is a 199-residue protein sequence, read N- to C-terminus: Recombination protein RecR (199 aa).

The C4-type zinc finger occupies 57-72 (CQSCRTFTEETYCPIC). Residues 81 to 176 (EVICVVETPA…TVSRIAHGVP (96 aa)) enclose the Toprim domain.

The protein belongs to the RecR family.

May play a role in DNA repair. It seems to be involved in an RecBC-independent recombinational process of DNA repair. It may act with RecF and RecO. This Shewanella pealeana (strain ATCC 700345 / ANG-SQ1) protein is Recombination protein RecR.